A 421-amino-acid polypeptide reads, in one-letter code: ATP-dependent RNA helicase RhlB (421 aa).

The Q motif motif lies at 9 to 37; sequence QKFSDFALHPAVIEALEKKGFHNCTPIQA. Residues 40–219 form the Helicase ATP-binding domain; that stretch reads LPLTLEGRDV…FEQMNNAEYV (180 aa). Residue 53–60 participates in ATP binding; that stretch reads AQTGTGKT. A DEAD box motif is present at residues 165-168; that stretch reads DEAD. The Helicase C-terminal domain occupies 245–390; the sequence is RLLQTLLEEE…VSKYNPDALM (146 aa). Residues 396–421 are disordered; it reads PLRLTRARPGNGPRRNGPPRNRRRSG. Residues 403-414 are compositionally biased toward low complexity; the sequence is RPGNGPRRNGPP.

Belongs to the DEAD box helicase family. RhlB subfamily. Component of the RNA degradosome, which is a multiprotein complex involved in RNA processing and mRNA degradation.

The protein localises to the cytoplasm. The enzyme catalyses ATP + H2O = ADP + phosphate + H(+). Functionally, DEAD-box RNA helicase involved in RNA degradation. Has RNA-dependent ATPase activity and unwinds double-stranded RNA. The chain is ATP-dependent RNA helicase RhlB from Klebsiella pneumoniae subsp. pneumoniae (strain ATCC 700721 / MGH 78578).